Here is a 353-residue protein sequence, read N- to C-terminus: Probable peptide ABC transporter ATP-binding protein y4tS (353 aa).

The 251-residue stretch at 6–256 folds into the ABC transporter domain; sequence LKVESLTKHY…PVHPYTEALI (251 aa). 49–56 is an ATP binding site; sequence GESGCGKS.

The protein belongs to the ABC transporter superfamily.

The protein localises to the cell inner membrane. Probably part of a binding-protein-dependent transport system y4tOPQRS for a peptide. Probably responsible for energy coupling to the transport system. In Sinorhizobium fredii (strain NBRC 101917 / NGR234), this protein is Probable peptide ABC transporter ATP-binding protein y4tS.